The sequence spans 154 residues: Protein MoxZ (154 aa).

This chain is Protein MoxZ (moxZ), found in Paracoccus denitrificans.